A 355-amino-acid chain; its full sequence is 3-isopropylmalate dehydrogenase (355 aa).

An NAD(+)-binding site is contributed by 78 to 91 (GYKWDNLPRPERPE). Substrate is bound by residues Arg98, Arg136, and Asp226. Residues Asp226, Asp250, and Asp254 each contribute to the Mg(2+) site. 284–296 (GSAPDIAGQDKAN) serves as a coordination point for NAD(+).

The protein belongs to the isocitrate and isopropylmalate dehydrogenases family. LeuB type 1 subfamily. As to quaternary structure, homodimer. It depends on Mg(2+) as a cofactor. Mn(2+) serves as cofactor.

It localises to the cytoplasm. It catalyses the reaction (2R,3S)-3-isopropylmalate + NAD(+) = 4-methyl-2-oxopentanoate + CO2 + NADH. It participates in amino-acid biosynthesis; L-leucine biosynthesis; L-leucine from 3-methyl-2-oxobutanoate: step 3/4. Functionally, catalyzes the oxidation of 3-carboxy-2-hydroxy-4-methylpentanoate (3-isopropylmalate) to 3-carboxy-4-methyl-2-oxopentanoate. The product decarboxylates to 4-methyl-2 oxopentanoate. This is 3-isopropylmalate dehydrogenase (leuB) from Arthrospira platensis (Spirulina platensis).